A 297-amino-acid chain; its full sequence is Diaminopimelate epimerase (297 aa).

Substrate is bound by residues Asn13, Gln46, and Asn66. Catalysis depends on Cys76, which acts as the Proton donor. Substrate-binding positions include 77–78, Asn174, Asn207, and 225–226; these read GN and ER. Cys234 serves as the catalytic Proton acceptor. 235–236 contributes to the substrate binding site; it reads GT.

This sequence belongs to the diaminopimelate epimerase family. In terms of assembly, homodimer.

It localises to the cytoplasm. The catalysed reaction is (2S,6S)-2,6-diaminopimelate = meso-2,6-diaminopimelate. It participates in amino-acid biosynthesis; L-lysine biosynthesis via DAP pathway; DL-2,6-diaminopimelate from LL-2,6-diaminopimelate: step 1/1. Its function is as follows. Catalyzes the stereoinversion of LL-2,6-diaminopimelate (L,L-DAP) to meso-diaminopimelate (meso-DAP), a precursor of L-lysine and an essential component of the bacterial peptidoglycan. In Leptothrix cholodnii (strain ATCC 51168 / LMG 8142 / SP-6) (Leptothrix discophora (strain SP-6)), this protein is Diaminopimelate epimerase.